A 254-amino-acid chain; its full sequence is Phosphate import ATP-binding protein PstB 2 (254 aa).

The region spanning 9 to 249 (FNIDNLNLFY…PRDDRTRGYV (241 aa)) is the ABC transporter domain. 41–48 (GPSGCGKS) contributes to the ATP binding site.

This sequence belongs to the ABC transporter superfamily. Phosphate importer (TC 3.A.1.7) family. As to quaternary structure, the complex is composed of two ATP-binding proteins (PstB), two transmembrane proteins (PstC and PstA) and a solute-binding protein (PstS).

The protein resides in the cell inner membrane. The enzyme catalyses phosphate(out) + ATP + H2O = ADP + 2 phosphate(in) + H(+). In terms of biological role, part of the ABC transporter complex PstSACB involved in phosphate import. Responsible for energy coupling to the transport system. This chain is Phosphate import ATP-binding protein PstB 2, found in Photobacterium profundum (strain SS9).